The primary structure comprises 292 residues: Ribosomal protein L11 methyltransferase (292 aa).

Thr-143, Gly-164, Asp-186, and Asn-228 together coordinate S-adenosyl-L-methionine.

This sequence belongs to the methyltransferase superfamily. PrmA family.

It is found in the cytoplasm. The catalysed reaction is L-lysyl-[protein] + 3 S-adenosyl-L-methionine = N(6),N(6),N(6)-trimethyl-L-lysyl-[protein] + 3 S-adenosyl-L-homocysteine + 3 H(+). In terms of biological role, methylates ribosomal protein L11. The polypeptide is Ribosomal protein L11 methyltransferase (Tolumonas auensis (strain DSM 9187 / NBRC 110442 / TA 4)).